Reading from the N-terminus, the 443-residue chain is Tubulin beta chain (443 aa).

GTP-binding residues include Q11, E69, S138, G142, T143, G144, N204, and N226. E69 provides a ligand contact to Mg(2+). Positions 424–443 are disordered; sequence QYQDASAEEEGEFEGEEEEA. A compositionally biased stretch (acidic residues) spans 429-443; the sequence is SAEEEGEFEGEEEEA.

Belongs to the tubulin family. In terms of assembly, dimer of alpha and beta chains. A typical microtubule is a hollow water-filled tube with an outer diameter of 25 nm and an inner diameter of 15 nM. Alpha-beta heterodimers associate head-to-tail to form protofilaments running lengthwise along the microtubule wall with the beta-tubulin subunit facing the microtubule plus end conferring a structural polarity. Microtubules usually have 13 protofilaments but different protofilament numbers can be found in some organisms and specialized cells. Mg(2+) is required as a cofactor.

It localises to the cytoplasm. Its subcellular location is the cytoskeleton. Functionally, tubulin is the major constituent of microtubules, a cylinder consisting of laterally associated linear protofilaments composed of alpha- and beta-tubulin heterodimers. Microtubules grow by the addition of GTP-tubulin dimers to the microtubule end, where a stabilizing cap forms. Below the cap, tubulin dimers are in GDP-bound state, owing to GTPase activity of alpha-tubulin. In Chlamydomonas incerta, this protein is Tubulin beta chain (TUBB).